The following is a 299-amino-acid chain: 4-diphosphocytidyl-2-C-methyl-D-erythritol kinase (299 aa).

The active site involves Lys16. Position 97 to 107 (97 to 107 (PVASGIGGGSA)) interacts with ATP. The active site involves Asp140.

This sequence belongs to the GHMP kinase family. IspE subfamily.

It carries out the reaction 4-CDP-2-C-methyl-D-erythritol + ATP = 4-CDP-2-C-methyl-D-erythritol 2-phosphate + ADP + H(+). Its pathway is isoprenoid biosynthesis; isopentenyl diphosphate biosynthesis via DXP pathway; isopentenyl diphosphate from 1-deoxy-D-xylulose 5-phosphate: step 3/6. Its function is as follows. Catalyzes the phosphorylation of the position 2 hydroxy group of 4-diphosphocytidyl-2C-methyl-D-erythritol. In Roseobacter denitrificans (strain ATCC 33942 / OCh 114) (Erythrobacter sp. (strain OCh 114)), this protein is 4-diphosphocytidyl-2-C-methyl-D-erythritol kinase.